The chain runs to 228 residues: LexA repressor (228 aa).

A DNA-binding region (H-T-H motif) is located at residues 26–46 (FDEMKEALDLRSKSGIHRLIT). Residues S149 and K187 each act as for autocatalytic cleavage activity in the active site.

Belongs to the peptidase S24 family. As to quaternary structure, homodimer.

It catalyses the reaction Hydrolysis of Ala-|-Gly bond in repressor LexA.. Its function is as follows. Represses a number of genes involved in the response to DNA damage (SOS response), including recA and lexA. In the presence of single-stranded DNA, RecA interacts with LexA causing an autocatalytic cleavage which disrupts the DNA-binding part of LexA, leading to derepression of the SOS regulon and eventually DNA repair. This chain is LexA repressor, found in Jannaschia sp. (strain CCS1).